Reading from the N-terminus, the 184-residue chain is uncharacterized protein (184 aa).

An N-terminal signal peptide occupies residues 1-23 (MFCLLHLCFYLANFASSIKRTHA).

Its subcellular location is the secreted. This is an uncharacterized protein from Homo sapiens (Human).